The chain runs to 472 residues: Karilysin (472 aa).

An N-terminal signal peptide occupies residues 1–20; it reads MKRFILLFFLSTIAIFKVYS. A propeptide spans 21 to 34 (activation peptide); it reads QRLYDNGPLTGDNN. Positions 102, 104, 117, 133, and 155 each coordinate Zn(2+). The active-site Proton donor/acceptor is the Glu156. Residues His159 and His165 each contribute to the Zn(2+) site. Residues 196–386 constitute a propeptide, removed in short form; that stretch reads YGYPFSISGP…AVSCSRTISP (191 aa). The propeptide at 387-472 is removed in long form; it reads FTLSPNPATD…QTYTQKLIKK (86 aa).

Belongs to the peptidase M10A family. Zn(2+) is required as a cofactor. Processes itself into the mature 18-kDa enzyme (Kly18) through sequential autoproteolytic cleavage at both the N- and C-termini. However, the maturation intermediate Kly38 is found to be more active than Kly18 and the rate for its processing is slow, which raises the question as to whether Kly38 is a physiologically relevant entity.

It localises to the secreted. With respect to regulation, autoprocessing and proteolytic activity are completely inhibited by EDTA and 1,10-phenanthroline in vitro. Proteolytic activity is 3-fold enhanced by Ca(2+) due to stabilization of the protein structure but inhibited by an excess of Zn(2+). Inhibitory studies of karilysin identified several phage display-selected peptides with apparent inhibition constants (Ki) in the micromolar range, among which is the tetrapeptide SWFP (Ki=10.7 uM). Functionally, metalloprotease able to cleave casein, gelatin, elastin, fibrinogen and fibronectin. Shows exclusive preference for hydrophobic residues, especially Leu, Tyr and Met, at the P1' position of substrates, and for Pro or Ala at P3. Can efficiently cleave the antimicrobial peptide LL-37 which is a component of the immune system, leading to a significant reduction of its bactericidal activity. Is also able to inhibit all pathways of the human complement system. The classical and lectin complement pathways are inhibited because of the efficient degradation of mannose-binding lectin, ficolin-2, ficolin-3, and C4 by karilysin, whereas inhibition of the terminal pathway is caused by cleavage of C5. Thus, karilysin appears to be a major virulence factor of T.forsythia that contributes to evasion of the human immune response and periodontal disease. Seems to act synergistically with gingipains from the periodontal pathogen P.gingivalis present at the same sites of infection. This Tannerella forsythia (strain ATCC 43037 / JCM 10827 / CCUG 21028 A / KCTC 5666 / FDC 338) (Bacteroides forsythus) protein is Karilysin (kly).